Reading from the N-terminus, the 281-residue chain is NADPH-dependent 7-cyano-7-deazaguanine reductase (281 aa).

87-89 serves as a coordination point for substrate; sequence IES. Residue 89–90 participates in NADPH binding; it reads SK. The active-site Thioimide intermediate is the cysteine 188. Aspartate 195 acts as the Proton donor in catalysis. Position 227–228 (227–228) interacts with substrate; the sequence is HE. Position 256-257 (256-257) interacts with NADPH; that stretch reads RG. The interval 261 to 281 is disordered; it reads INPYRSTEQDKPAHNHRMARQ.

Belongs to the GTP cyclohydrolase I family. QueF type 2 subfamily. As to quaternary structure, homodimer.

It localises to the cytoplasm. It catalyses the reaction 7-aminomethyl-7-carbaguanine + 2 NADP(+) = 7-cyano-7-deazaguanine + 2 NADPH + 3 H(+). It participates in tRNA modification; tRNA-queuosine biosynthesis. Catalyzes the NADPH-dependent reduction of 7-cyano-7-deazaguanine (preQ0) to 7-aminomethyl-7-deazaguanine (preQ1). In Vibrio parahaemolyticus serotype O3:K6 (strain RIMD 2210633), this protein is NADPH-dependent 7-cyano-7-deazaguanine reductase.